An 860-amino-acid polypeptide reads, in one-letter code: DNA mismatch repair protein MutS (860 aa).

Gly607–Ser614 contributes to the ATP binding site.

It belongs to the DNA mismatch repair MutS family.

Functionally, this protein is involved in the repair of mismatches in DNA. It is possible that it carries out the mismatch recognition step. This protein has a weak ATPase activity. This Listeria monocytogenes serotype 4b (strain CLIP80459) protein is DNA mismatch repair protein MutS.